The following is a 157-amino-acid chain: Ribosome-binding factor A (157 aa).

Positions 124 to 157 are disordered; that stretch reads SAGAQFAGDADPYRKPESDDESDTAAKTDGDAAE. The span at 147 to 157 shows a compositional bias: basic and acidic residues; the sequence is TAAKTDGDAAE.

It belongs to the RbfA family. As to quaternary structure, monomer. Binds 30S ribosomal subunits, but not 50S ribosomal subunits or 70S ribosomes.

Its subcellular location is the cytoplasm. One of several proteins that assist in the late maturation steps of the functional core of the 30S ribosomal subunit. Associates with free 30S ribosomal subunits (but not with 30S subunits that are part of 70S ribosomes or polysomes). Required for efficient processing of 16S rRNA. May interact with the 5'-terminal helix region of 16S rRNA. The polypeptide is Ribosome-binding factor A (Streptomyces avermitilis (strain ATCC 31267 / DSM 46492 / JCM 5070 / NBRC 14893 / NCIMB 12804 / NRRL 8165 / MA-4680)).